A 114-amino-acid polypeptide reads, in one-letter code: MSDETVLPLQFTEAAAKKVKLLISDEENPNLKLRVYITGGGCSGFQYGFTFDDQINDGDMTIEKQGVELVVDPMSLQYLVGGAVDYTEGLEGSRFIVTNPNAKSTCGCGSSFSI.

The iron-sulfur cluster site is built by C42, C106, and C108.

It belongs to the HesB/IscA family. In terms of assembly, homodimer. It depends on iron-sulfur cluster as a cofactor.

In terms of biological role, required for insertion of 4Fe-4S clusters for at least IspG. The polypeptide is Iron-sulfur cluster insertion protein ErpA (Yersinia enterocolitica serotype O:8 / biotype 1B (strain NCTC 13174 / 8081)).